A 393-amino-acid polypeptide reads, in one-letter code: S-adenosylmethionine synthase 1 (393 aa).

Residue Glu-9 coordinates Mg(2+). His-15 provides a ligand contact to ATP. Glu-43 contributes to the K(+) binding site. L-methionine is bound by residues Glu-56 and Gln-99. ATP contacts are provided by residues 167–169, 235–238, Asp-246, 252–253, Ala-269, Lys-273, and Lys-277; these read DGK, SGRF, and RK. Residue Asp-246 participates in L-methionine binding. Lys-277 is a binding site for L-methionine.

It belongs to the AdoMet synthase family. As to quaternary structure, homotetramer. Requires Mn(2+) as cofactor. Mg(2+) serves as cofactor. The cofactor is Co(2+). K(+) is required as a cofactor. Mostly expressed in stems.

The protein localises to the cytoplasm. The enzyme catalyses L-methionine + ATP + H2O = S-adenosyl-L-methionine + phosphate + diphosphate. It participates in amino-acid biosynthesis; S-adenosyl-L-methionine biosynthesis; S-adenosyl-L-methionine from L-methionine: step 1/1. Functionally, catalyzes the formation of S-adenosylmethionine from methionine and ATP. The reaction comprises two steps that are both catalyzed by the same enzyme: formation of S-adenosylmethionine (AdoMet) and triphosphate, and subsequent hydrolysis of the triphosphate. This Solanum lycopersicum (Tomato) protein is S-adenosylmethionine synthase 1 (SAM1).